The primary structure comprises 169 residues: MNKPICSTGLRWLWLAVVVVILDISSKQWVMAHFALYESVPLIPFFNLTYAQNFGAAFSFLADKSGWQRWFFAGIAIGISVVLMVMMYRSTAKQRLINCAYALIIGGALGNLYDRLVHGAVNDFLDFYINNWHFPTFNLADVAICIGAALVIFEGFLSPVEKNAVNNDE.

Transmembrane regions (helical) follow at residues 4-24 (PICS…ILDI), 29-49 (WVMA…FNLT), 70-90 (WFFA…MYRS), and 101-121 (YALI…HGAV). Active-site residues include Asp123 and Asp141. Residues 137 to 157 (FNLADVAICIGAALVIFEGFL) traverse the membrane as a helical segment.

This sequence belongs to the peptidase A8 family.

It is found in the cell inner membrane. The enzyme catalyses Release of signal peptides from bacterial membrane prolipoproteins. Hydrolyzes -Xaa-Yaa-Zaa-|-(S,diacylglyceryl)Cys-, in which Xaa is hydrophobic (preferably Leu), and Yaa (Ala or Ser) and Zaa (Gly or Ala) have small, neutral side chains.. The protein operates within protein modification; lipoprotein biosynthesis (signal peptide cleavage). This protein specifically catalyzes the removal of signal peptides from prolipoproteins. The protein is Lipoprotein signal peptidase of Yersinia pestis bv. Antiqua (strain Antiqua).